The primary structure comprises 386 residues: Adiponectin receptor protein 2 (386 aa).

The tract at residues 1–71 (MNEPTENRLG…HEYSDEAPQE (71 aa)) is disordered. Residues 1 to 147 (MNEPTENRLG…SIFRIHTETG (147 aa)) are Cytoplasmic-facing. Residues 15–41 (PEPDIRLRKGHQLDGTRRGDNDSHQGD) are compositionally biased toward basic and acidic residues. The helical transmembrane segment at 148–168 (NIWTHLLGCVFFLCLGIFYMF) threads the bilayer. The Extracellular segment spans residues 169–181 (RPNISFVAPLQEK). A helical transmembrane segment spans residues 182-202 (VVFGLFFLGAILCLSFSWLFH). His-202 contacts Zn(2+). Residues 203 to 213 (TVYCHSEGVSR) are Cytoplasmic-facing. Residues 214–234 (LFSKLDYSGIALLIMGSFVPW) traverse the membrane as a helical segment. Topologically, residues 235-245 (LYYSFYCNPQP) are extracellular. The chain crosses the membrane as a helical span at residues 246–266 (CFIYLIVICVLGIAAIIVSQW). Residues 267-273 (DMFATPQ) lie on the Cytoplasmic side of the membrane. A helical membrane pass occupies residues 274-294 (YRGVRAGVFLGLGLSGIIPTL). At 295 to 309 (HYVISEGFLKAATIG) the chain is on the extracellular side. The chain crosses the membrane as a helical span at residues 310–330 (QIGWLMLMASLYITGAALYAA). The Cytoplasmic segment spans residues 331-348 (RIPERFFPGKCDIWFHSH). Zn(2+) is bound by residues His-348 and His-352. A helical membrane pass occupies residues 349-369 (QLFHIFVVAGAFVHFHGVSNL). Residues 370-386 (QEFRFMIGGGCSEEDAL) are Extracellular-facing.

It belongs to the ADIPOR family. May form homooligomers and heterooligomers with ADIPOR1. Interacts with APPL2 (via BAR domain); ADIPOQ dissociates this interaction. In terms of tissue distribution, ubiquitous. Highly expressed in skeletal muscle, liver and placenta. Weakly expressed in brain, heart, colon, spleen, kidney, thymus, small intestine, peripheral blood leukocytes and lung.

It localises to the cell membrane. Its function is as follows. Receptor for ADIPOQ, an essential hormone secreted by adipocytes that regulates glucose and lipid metabolism. Required for normal body fat and glucose homeostasis. ADIPOQ-binding activates a signaling cascade that leads to increased PPARA activity, and ultimately to increased fatty acid oxidation and glucose uptake. Has intermediate affinity for globular and full-length adiponectin. Required for normal revascularization after chronic ischemia caused by severing of blood vessels. This is Adiponectin receptor protein 2 from Homo sapiens (Human).